The sequence spans 166 residues: NAD(P)H-quinone oxidoreductase subunit I, chloroplastic (166 aa).

4Fe-4S ferredoxin-type domains follow at residues 55–84 (GRIH…VDWK) and 95–124 (LNYS…MTEE). Cys64, Cys67, Cys70, Cys74, Cys104, Cys107, Cys110, and Cys114 together coordinate [4Fe-4S] cluster.

Belongs to the complex I 23 kDa subunit family. NDH is composed of at least 16 different subunits, 5 of which are encoded in the nucleus. [4Fe-4S] cluster is required as a cofactor.

It localises to the plastid. Its subcellular location is the chloroplast thylakoid membrane. It catalyses the reaction a plastoquinone + NADH + (n+1) H(+)(in) = a plastoquinol + NAD(+) + n H(+)(out). The enzyme catalyses a plastoquinone + NADPH + (n+1) H(+)(in) = a plastoquinol + NADP(+) + n H(+)(out). NDH shuttles electrons from NAD(P)H:plastoquinone, via FMN and iron-sulfur (Fe-S) centers, to quinones in the photosynthetic chain and possibly in a chloroplast respiratory chain. The immediate electron acceptor for the enzyme in this species is believed to be plastoquinone. Couples the redox reaction to proton translocation, and thus conserves the redox energy in a proton gradient. The sequence is that of NAD(P)H-quinone oxidoreductase subunit I, chloroplastic from Rensonia salvadorica.